A 497-amino-acid chain; its full sequence is Probable cytosol aminopeptidase (497 aa).

Mn(2+) is bound by residues Lys-268 and Asp-273. Residue Lys-280 is part of the active site. The Mn(2+) site is built by Asp-291, Asp-350, and Glu-352. Residue Arg-354 is part of the active site.

Belongs to the peptidase M17 family. Mn(2+) is required as a cofactor.

The protein resides in the cytoplasm. It catalyses the reaction Release of an N-terminal amino acid, Xaa-|-Yaa-, in which Xaa is preferably Leu, but may be other amino acids including Pro although not Arg or Lys, and Yaa may be Pro. Amino acid amides and methyl esters are also readily hydrolyzed, but rates on arylamides are exceedingly low.. It carries out the reaction Release of an N-terminal amino acid, preferentially leucine, but not glutamic or aspartic acids.. Functionally, presumably involved in the processing and regular turnover of intracellular proteins. Catalyzes the removal of unsubstituted N-terminal amino acids from various peptides. This Alkalilimnicola ehrlichii (strain ATCC BAA-1101 / DSM 17681 / MLHE-1) protein is Probable cytosol aminopeptidase.